The following is a 407-amino-acid chain: tRNA (uracil(54)-C(5))-methyltransferase (407 aa).

Residues Cys-61, Cys-67, Cys-70, and Cys-137 each contribute to the [4Fe-4S] cluster site. S-adenosyl-L-methionine-binding positions include Gln-253, Tyr-279, Thr-284, 300-301 (DS), Asp-327, and Asp-341. Cys-368 serves as the catalytic Nucleophile. Glu-400 serves as the catalytic Proton acceptor.

This sequence belongs to the class I-like SAM-binding methyltransferase superfamily. RNA M5U methyltransferase family.

It catalyses the reaction uridine(54) in tRNA + S-adenosyl-L-methionine = 5-methyluridine(54) in tRNA + S-adenosyl-L-homocysteine + H(+). Functionally, catalyzes the formation of 5-methyl-uridine at position 54 (m5U54) in tRNA. The polypeptide is tRNA (uracil(54)-C(5))-methyltransferase (Pyrococcus horikoshii (strain ATCC 700860 / DSM 12428 / JCM 9974 / NBRC 100139 / OT-3)).